Consider the following 1128-residue polypeptide: Nck-associated protein 1 (1128 aa).

Serine 2 carries the post-translational modification N-acetylserine. Positions alanine 640–methionine 665 are disordered. Basic and acidic residues predominate over residues lysine 651–methionine 665. Residues isoleucine 995–methionine 1015 traverse the membrane as a helical segment.

The protein belongs to the HEM-1/HEM-2 family. In terms of assembly, component of the WAVE1 complex composed of ABI2, CYFIP1 or CYFIP2, BRK1, NCKAP1 and WASF1/WAVE1. Within the complex, a heterodimer containing NCKAP1 and CYFIP1 interacts with a heterotrimer formed by WAVE1, ABI2 and BRK1. Component of the WAVE2 complex composed of ABI1, CYFIP1/SRA1, NCKAP1/NAP1 and WASF2/WAVE2. CYFIP2 binds to activated RAC1 which causes the complex to dissociate, releasing activated WASF1. The complex can also be activated by NCK1. Associates preferentially with the first SH3 domain of NCK. Interacts with NYAP1, NYAP2 and MYO16. Interacts with TMEM132D. (Microbial infection) Interacts with human cytomegalovirus protein UL135. As to expression, expressed in all tissues examined except peripheral blood leukocytes, with highest expression in brain, heart, and skeletal muscle. Expressed in cells of various brain regions including Purkinje cells and dentate nucleus of the cerebellum, CA4 region and dentate gyrus of the hippocampus, and in frontal gray and white matter.

The protein resides in the cell membrane. Its subcellular location is the cell projection. The protein localises to the lamellipodium membrane. Functionally, part of the WAVE complex that regulates lamellipodia formation. The WAVE complex regulates actin filament reorganization via its interaction with the Arp2/3 complex. Actin remodeling activity is regulated by RAC1. As component of the WAVE1 complex, required for BDNF-NTRK2 endocytic trafficking and signaling from early endosomes. This is Nck-associated protein 1 (NCKAP1) from Homo sapiens (Human).